Reading from the N-terminus, the 86-residue chain is ATP synthase subunit c (86 aa).

Helical transmembrane passes span 8 to 28 (VLAA…GAGI) and 66 to 86 (GIYA…IGML).

The protein belongs to the ATPase C chain family. In terms of assembly, F-type ATPases have 2 components, F(1) - the catalytic core - and F(0) - the membrane proton channel. F(1) has five subunits: alpha(3), beta(3), gamma(1), delta(1), epsilon(1). F(0) has three main subunits: a(1), b(2) and c(10-14). The alpha and beta chains form an alternating ring which encloses part of the gamma chain. F(1) is attached to F(0) by a central stalk formed by the gamma and epsilon chains, while a peripheral stalk is formed by the delta and b chains.

Its subcellular location is the cell membrane. In terms of biological role, f(1)F(0) ATP synthase produces ATP from ADP in the presence of a proton or sodium gradient. F-type ATPases consist of two structural domains, F(1) containing the extramembraneous catalytic core and F(0) containing the membrane proton channel, linked together by a central stalk and a peripheral stalk. During catalysis, ATP synthesis in the catalytic domain of F(1) is coupled via a rotary mechanism of the central stalk subunits to proton translocation. Functionally, key component of the F(0) channel; it plays a direct role in translocation across the membrane. A homomeric c-ring of between 10-14 subunits forms the central stalk rotor element with the F(1) delta and epsilon subunits. This chain is ATP synthase subunit c, found in Natranaerobius thermophilus (strain ATCC BAA-1301 / DSM 18059 / JW/NM-WN-LF).